The following is a 107-amino-acid chain: U1-lycotoxin-Ls1p (107 aa).

Positions 1 to 20 (MMKVLVVVALLVTLISYSSS) are cleaved as a signal peptide. Residues 21 to 41 (EGIDDLEADELLSLMANEQTR) constitute a propeptide that is removed on maturation. 4 disulfide bridges follow: Cys44–Cys59, Cys51–Cys68, Cys58–Cys86, and Cys70–Cys84.

It belongs to the neurotoxin 19 (CSTX) family. 04 (U1-Lctx) subfamily. As to expression, expressed by the venom gland.

Its subcellular location is the secreted. This Lycosa singoriensis (Wolf spider) protein is U1-lycotoxin-Ls1p.